The chain runs to 793 residues: Signal transducer and activator of transcription 5A (793 aa).

Tyr-90 is modified (phosphotyrosine). Ser-128 bears the Phosphoserine mark. The SH2 domain maps to 589-686; the sequence is WNDGAILGFV…EVFAKYYTPV (98 aa). Tyr-682 is modified (phosphotyrosine). Position 694 is a phosphotyrosine; by JAK2 (Tyr-694). The disordered stretch occupies residues 772 to 793; the sequence is DSLDPRLSPPAGLFTSARSSLS. A Phosphoserine modification is found at Ser-779.

Belongs to the transcription factor STAT family. As to quaternary structure, forms a homodimer or a heterodimer with a related family member. Binds NR3C1. Interacts with NCOA1 and SOCS7. Interacts with ERBB4. Interacts with EBF4. In terms of processing, ISGylated. Post-translationally, tyrosine phosphorylated in response to KITLG/SCF, IL2, IL3, IL7, IL15, CSF2/GMCSF, GH1, PRL, EPO and THPO. Activated KIT promotes phosphorylation on tyrosine residues and subsequent translocation to the nucleus. Tyrosine phosphorylated in response to constitutively activated FGFR1, FGFR2, FGFR3 and FGFR4. Tyrosine phosphorylation is required for DNA-binding activity and dimerization. Serine phosphorylation is also required for maximal transcriptional activity. Tyrosine phosphorylated in response to signaling via activated FLT3; wild-type FLT3 results in much weaker phosphorylation than constitutively activated mutant FLT3. Alternatively, can be phosphorylated by JAK2 at Tyr-694. In terms of tissue distribution, expressed in heart, lung, and weakly in muscle.

The protein resides in the cytoplasm. The protein localises to the nucleus. Carries out a dual function: signal transduction and activation of transcription. Mediates cellular responses to the cytokine KITLG/SCF and other growth factors. May mediate cellular responses to activated FGFR1, FGFR2, FGFR3 and FGFR4. Binds to the GAS element and activates PRL-induced transcription. Regulates the expression of milk proteins during lactation. In Rattus norvegicus (Rat), this protein is Signal transducer and activator of transcription 5A (Stat5a).